The sequence spans 52 residues: Large ribosomal subunit protein bL32c (52 aa).

This sequence belongs to the bacterial ribosomal protein bL32 family.

It is found in the plastid. It localises to the chloroplast. The protein is Large ribosomal subunit protein bL32c of Nymphaea alba (White water-lily).